A 119-amino-acid chain; its full sequence is Large ribosomal subunit protein uL22c (119 aa).

It belongs to the universal ribosomal protein uL22 family. Part of the 50S ribosomal subunit.

The protein localises to the plastid. The protein resides in the chloroplast. Its function is as follows. This protein binds specifically to 23S rRNA. In terms of biological role, the globular domain of the protein is located near the polypeptide exit tunnel on the outside of the subunit, while an extended beta-hairpin is found that lines the wall of the exit tunnel in the center of the 70S ribosome. This Spirogyra maxima (Green alga) protein is Large ribosomal subunit protein uL22c (rpl22).